The chain runs to 171 residues: uncharacterized protein (171 aa).

Disordered regions lie at residues 1–41 and 114–147; these read MDAV…SKPK and DSLG…RPKR. Residues 27 to 38 show a composition bias toward low complexity; it reads AQQQQGPSAQGS. Residues 116 to 125 show a composition bias toward polar residues; sequence LGNTASSSSM.

This is an uncharacterized protein from Mus musculus (Mouse).